The sequence spans 282 residues: Protein OS-9 homolog (282 aa).

The first 23 residues, 1–23 (MRITQILLCLVIVALSSSSHVWS), serve as a signal peptide directing secretion. Residue Asn94 is glycosylated (N-linked (GlcNAc...) asparagine). Residues 120-239 (EKCLFRQEGW…TVQCPTLCKH (120 aa)) form the MRH domain. An intrachain disulfide couples Cys122 to Cys135. Trp129, Trp130, and Gln142 together coordinate a mannooligosaccharide derivative. Asn169 and Asn190 each carry an N-linked (GlcNAc...) asparagine glycan. 2 cysteine pairs are disulfide-bonded: Cys194–Cys225 and Cys209–Cys237. The a mannooligosaccharide derivative site is built by Asp195, Arg201, Glu221, and Tyr227. Over residues 262-276 (DATRNKEEQAVDESP) the composition is skewed to basic and acidic residues. The segment at 262–282 (DATRNKEEQAVDESPKMIADS) is disordered.

The protein belongs to the OS-9 family. Interacts with HRD3A.

Its subcellular location is the endoplasmic reticulum. Functionally, lectin which functions in endoplasmic reticulum (ER) quality control and ER-associated degradation (ERAD). May bind terminally misfolded non-glycosylated proteins as well as improperly folded glycoproteins, retain them in the ER, and possibly transfer them to the ubiquitination machinery and promote their degradation. Targets the misfolded LRR receptor kinase BRI1 and the misfolded receptor-like kinase EFR. This chain is Protein OS-9 homolog, found in Arabidopsis thaliana (Mouse-ear cress).